A 575-amino-acid polypeptide reads, in one-letter code: Proline--tRNA ligase (575 aa).

Belongs to the class-II aminoacyl-tRNA synthetase family. ProS type 1 subfamily. As to quaternary structure, homodimer.

It is found in the cytoplasm. The catalysed reaction is tRNA(Pro) + L-proline + ATP = L-prolyl-tRNA(Pro) + AMP + diphosphate. Its function is as follows. Catalyzes the attachment of proline to tRNA(Pro) in a two-step reaction: proline is first activated by ATP to form Pro-AMP and then transferred to the acceptor end of tRNA(Pro). As ProRS can inadvertently accommodate and process non-cognate amino acids such as alanine and cysteine, to avoid such errors it has two additional distinct editing activities against alanine. One activity is designated as 'pretransfer' editing and involves the tRNA(Pro)-independent hydrolysis of activated Ala-AMP. The other activity is designated 'posttransfer' editing and involves deacylation of mischarged Ala-tRNA(Pro). The misacylated Cys-tRNA(Pro) is not edited by ProRS. The sequence is that of Proline--tRNA ligase from Heliobacterium modesticaldum (strain ATCC 51547 / Ice1).